We begin with the raw amino-acid sequence, 411 residues long: Serine hydroxymethyltransferase (411 aa).

120–122 (GHL) is a binding site for (6S)-5,6,7,8-tetrahydrofolate. Lys225 is subject to N6-(pyridoxal phosphate)lysine. 350–352 (SPF) lines the (6S)-5,6,7,8-tetrahydrofolate pocket.

It belongs to the SHMT family. In terms of assembly, homodimer. Pyridoxal 5'-phosphate is required as a cofactor.

It is found in the cytoplasm. The enzyme catalyses (6R)-5,10-methylene-5,6,7,8-tetrahydrofolate + glycine + H2O = (6S)-5,6,7,8-tetrahydrofolate + L-serine. It functions in the pathway one-carbon metabolism; tetrahydrofolate interconversion. The protein operates within amino-acid biosynthesis; glycine biosynthesis; glycine from L-serine: step 1/1. Catalyzes the reversible interconversion of serine and glycine with tetrahydrofolate (THF) serving as the one-carbon carrier. This reaction serves as the major source of one-carbon groups required for the biosynthesis of purines, thymidylate, methionine, and other important biomolecules. Also exhibits THF-independent aldolase activity toward beta-hydroxyamino acids, producing glycine and aldehydes, via a retro-aldol mechanism. This is Serine hydroxymethyltransferase from Limosilactobacillus reuteri (strain DSM 20016) (Lactobacillus reuteri).